A 117-amino-acid chain; its full sequence is Large ribosomal subunit protein uL18 (117 aa).

Belongs to the universal ribosomal protein uL18 family. In terms of assembly, part of the 50S ribosomal subunit; part of the 5S rRNA/L5/L18/L25 subcomplex. Contacts the 5S and 23S rRNAs.

Its function is as follows. This is one of the proteins that bind and probably mediate the attachment of the 5S RNA into the large ribosomal subunit, where it forms part of the central protuberance. The polypeptide is Large ribosomal subunit protein uL18 (Colwellia psychrerythraea (strain 34H / ATCC BAA-681) (Vibrio psychroerythus)).